The primary structure comprises 508 residues: Protein O-glucosyltransferase 3 (508 aa).

Residues 1–24 (MLGVRRALLLPPLQLALLVAAGTG) form the signal peptide. The Filamin repeat unit spans residues 25–134 (ARVSAPRSLA…VAQSPYILKG (110 aa)). An N-linked (GlcNAc...) asparagine glycan is attached at Asn307. Positions 480 to 508 (RDGMERVPQPDDSTSVRQCHRKRPEREEL) are disordered. A Prevents secretion from ER motif is present at residues 505-508 (REEL).

It belongs to the KDELC family.

The protein resides in the endoplasmic reticulum lumen. It carries out the reaction L-seryl-[EGF-like domain protein] + UDP-alpha-D-glucose = 3-O-(beta-D-glucosyl)-L-seryl-[EGF-like domain protein] + UDP + H(+). It catalyses the reaction L-seryl-[EGF-like domain protein] + UDP-alpha-D-xylose = 3-O-(beta-D-xylosyl)-L-seryl-[EGF-like domain protein] + UDP + H(+). The protein operates within protein modification; protein glycosylation. In terms of biological role, protein glucosyltransferase that catalyzes the transfer of glucose from UDP-glucose to a serine residue within the consensus sequence peptide C-X-N-T-X-G-S-F-X-C. Can also catalyze the transfer of xylose from UDP-xylose but less efficiently. Specifically targets extracellular EGF repeats of proteins such as NOTCH1, NOTCH3, FBN1, FBN2 and LTBP1. May regulate the transport of NOTCH1 and NOTCH3 to the plasma membrane and thereby the Notch signaling pathway. This is Protein O-glucosyltransferase 3 (Poglut3) from Rattus norvegicus (Rat).